We begin with the raw amino-acid sequence, 341 residues long: uncharacterized protein (341 aa).

NADP(+) is bound at residue 58-82 (ITGGSSGIGAAAAKKIAEAGGTVVL). S194 contacts substrate. Y207 acts as the Proton acceptor in catalysis. Residues 309 to 329 (DSSAAKGSESQTDTSELDKRS) form a disordered region.

This sequence belongs to the short-chain dehydrogenases/reductases (SDR) family.

This is an uncharacterized protein from Mycobacterium bovis (strain ATCC BAA-935 / AF2122/97).